Here is a 293-residue protein sequence, read N- to C-terminus: 4-hydroxy-tetrahydrodipicolinate synthase (293 aa).

T45 is a pyruvate binding site. The active-site Proton donor/acceptor is the Y133. K162 serves as the catalytic Schiff-base intermediate with substrate. I204 provides a ligand contact to pyruvate.

This sequence belongs to the DapA family. Homotetramer; dimer of dimers.

It is found in the cytoplasm. The enzyme catalyses L-aspartate 4-semialdehyde + pyruvate = (2S,4S)-4-hydroxy-2,3,4,5-tetrahydrodipicolinate + H2O + H(+). It functions in the pathway amino-acid biosynthesis; L-lysine biosynthesis via DAP pathway; (S)-tetrahydrodipicolinate from L-aspartate: step 3/4. Catalyzes the condensation of (S)-aspartate-beta-semialdehyde [(S)-ASA] and pyruvate to 4-hydroxy-tetrahydrodipicolinate (HTPA). The chain is 4-hydroxy-tetrahydrodipicolinate synthase from Brucella suis biovar 1 (strain 1330).